We begin with the raw amino-acid sequence, 296 residues long: Deleted in azoospermia-like (296 aa).

The segment covering 1–18 (MSAANPETPNSTISREAN) has biased composition (polar residues). Positions 1 to 25 (MSAANPETPNSTISREANTQSSSAA) are disordered. Residues 40-115 (NTVFVGGIDV…KKLKLGPAIR (76 aa)) form the RRM domain. Residues 80–132 (KGYGFVSFFNDVDVQKIVESQINFHGKKLKLGPAIRKQNLCAYHVQPRPLVFN) are homodimerization. One can recognise a DAZ domain in the interval 167 to 190 (AYPPYPNSPVQVITGYQLPVYNYQ). Phosphotyrosine is present on Tyr277.

The protein belongs to the RRM DAZ family. In terms of assembly, homodimer and heterodimer. Forms a heterodimer with DAZ. Interacts with BOLL, DAZAP1 and DAZAP2. Interacts with PUM2 Multiple DAZL RRMs can bind to a single RNA containing multiple GUU triplets. As to expression, testis specific.

Its subcellular location is the cytoplasm. The protein resides in the nucleus. RNA-binding protein, which is essential for gametogenesis in both males and females. Plays a central role during spermatogenesis. Acts by binding to the 3'-UTR of mRNA, specifically recognizing GUU triplets, and thereby regulating the translation of key transcripts. This chain is Deleted in azoospermia-like (DAZL), found in Callithrix jacchus (White-tufted-ear marmoset).